We begin with the raw amino-acid sequence, 336 residues long: Dihydroorotate dehydrogenase (quinone) (336 aa).

Residues 62–66 (AGLDK) and threonine 86 contribute to the FMN site. Lysine 66 lines the substrate pocket. 111–115 (NRMGF) lines the substrate pocket. Positions 139 and 172 each coordinate FMN. Asparagine 172 provides a ligand contact to substrate. The Nucleophile role is filled by serine 175. Substrate is bound at residue asparagine 177. FMN is bound by residues lysine 217 and threonine 245. 246-247 (NT) lines the substrate pocket. FMN is bound by residues glycine 268, glycine 297, and 318-319 (YS).

Belongs to the dihydroorotate dehydrogenase family. Type 2 subfamily. Monomer. FMN is required as a cofactor.

The protein resides in the cell membrane. The enzyme catalyses (S)-dihydroorotate + a quinone = orotate + a quinol. It functions in the pathway pyrimidine metabolism; UMP biosynthesis via de novo pathway; orotate from (S)-dihydroorotate (quinone route): step 1/1. Functionally, catalyzes the conversion of dihydroorotate to orotate with quinone as electron acceptor. This is Dihydroorotate dehydrogenase (quinone) from Salmonella arizonae (strain ATCC BAA-731 / CDC346-86 / RSK2980).